The sequence spans 421 residues: Vinorine synthase (421 aa).

Active-site proton acceptor residues include H160 and D362.

Belongs to the plant acyltransferase family. Monomer. In terms of tissue distribution, mainly expressed in roots and, to a lower level, in leaves.

It carries out the reaction 16-epivellosimine + acetyl-CoA = vinorine + CoA. Its pathway is alkaloid biosynthesis; ajmaline biosynthesis. Its activity is regulated as follows. Complete inhibition by 4-(2-aminoethyl)-benzenesulfonyl fluoride (AEBSF), N-tosyl-L-phenylalanine chloromethylketone (TPCK), Hg(2+) and diethyl-pyrocarbonate (DEPC). 50% inhibition by N-(N-(L-3-trans-carboxirane-2-carbonyl)-L-leucyl)-agmanitine (E-64), N-alpha-p-tosyl-L-lysine chloromethylketone (TLCK) and phenylmethylsulfonyl fluoride (PMSF). Acetyltransferase involved in the biosynthesis of ajmaline-type monoterpenoid indole alkaloids (MIAs) natural products, important plant-derived pharmaceuticals used in the therapy of heart disorders. Catalyzes the conversion of 16-epivellosimine to vinorine, precursor of vomilenine, an intermediate chemical in the biosynthesis of ajmaline. Acts on gardneral, but not on polyneuridine aldehyde or N-methylgardneral. In Rauvolfia serpentina (Serpentine wood), this protein is Vinorine synthase.